Consider the following 244-residue polypeptide: High frequency lysogenization protein HflD homolog (244 aa).

The protein belongs to the HflD family.

The protein localises to the cytoplasm. It is found in the cell inner membrane. The polypeptide is High frequency lysogenization protein HflD homolog (Acinetobacter baumannii (strain SDF)).